We begin with the raw amino-acid sequence, 251 residues long: Protein unc-119 homolog B (251 aa).

Residues M1–S13 are compositionally biased toward polar residues. The segment at M1–A56 is disordered. S2 carries the post-translational modification N-acetylserine. An N6-acetyllysine modification is found at K24. Residue Y142 participates in tetradecanoate binding.

This sequence belongs to the PDE6D/unc-119 family. Found in a complex with ARL3, RP2 and UNC119B; RP2 induces hydrolysis of GTP ARL3 in the complex, leading to the release of UNC119B. Interacts with NPHP3 (when myristoylated). Interacts with CYS1 (when myristoylated). Interacts with MACIR; interaction only takes place when UNC119B is not liganded with myristoylated proteins.

It is found in the cell projection. Its subcellular location is the cilium. Functionally, myristoyl-binding protein that acts as a cargo adapter: specifically binds the myristoyl moiety of a subset of N-terminally myristoylated proteins and is required for their localization. Binds myristoylated NPHP3 and plays a key role in localization of NPHP3 to the primary cilium membrane. Does not bind all myristoylated proteins. Probably plays a role in trafficking proteins in photoreceptor cells. The sequence is that of Protein unc-119 homolog B (Unc119b) from Mus musculus (Mouse).